A 488-amino-acid polypeptide reads, in one-letter code: Glutamyl-tRNA(Gln) amidotransferase subunit A (488 aa).

Active-site charge relay system residues include Lys76 and Ser152. Ser176 acts as the Acyl-ester intermediate in catalysis.

Belongs to the amidase family. GatA subfamily. As to quaternary structure, heterotrimer of A, B and C subunits.

The enzyme catalyses L-glutamyl-tRNA(Gln) + L-glutamine + ATP + H2O = L-glutaminyl-tRNA(Gln) + L-glutamate + ADP + phosphate + H(+). Functionally, allows the formation of correctly charged Gln-tRNA(Gln) through the transamidation of misacylated Glu-tRNA(Gln) in organisms which lack glutaminyl-tRNA synthetase. The reaction takes place in the presence of glutamine and ATP through an activated gamma-phospho-Glu-tRNA(Gln). The protein is Glutamyl-tRNA(Gln) amidotransferase subunit A of Oceanobacillus iheyensis (strain DSM 14371 / CIP 107618 / JCM 11309 / KCTC 3954 / HTE831).